We begin with the raw amino-acid sequence, 271 residues long: Octanoyltransferase LipM (271 aa).

The BPL/LPL catalytic domain occupies 31–242; the sequence is GHNKPTLRFY…GLAEQFNVEF (212 aa). Cys144 acts as the Acyl-thioester intermediate in catalysis.

This sequence belongs to the octanoyltransferase LipM family. In terms of assembly, monomer.

It carries out the reaction octanoyl-[ACP] + L-lysyl-[protein] = N(6)-octanoyl-L-lysyl-[protein] + holo-[ACP] + H(+). It participates in protein modification; protein lipoylation via endogenous pathway; protein N(6)-(lipoyl)lysine from octanoyl-[acyl-carrier-protein]. Catalyzes the transfer of endogenously produced octanoic acid from octanoyl-acyl-carrier-protein onto the lipoyl domain of GcvH, an intermediate carrier during protein lipoylation. This chain is Octanoyltransferase LipM, found in Clostridioides difficile (strain 630) (Peptoclostridium difficile).